The chain runs to 294 residues: Nucleotide-binding protein Smal_0950 (294 aa).

Residue 16–23 (GLSGSGKS) participates in ATP binding. 69–72 (DVRG) contacts GTP.

Belongs to the RapZ-like family.

Its function is as follows. Displays ATPase and GTPase activities. In Stenotrophomonas maltophilia (strain R551-3), this protein is Nucleotide-binding protein Smal_0950.